The chain runs to 305 residues: UDP-3-O-acyl-N-acetylglucosamine deacetylase (305 aa).

Positions 78, 237, and 241 each coordinate Zn(2+). The active-site Proton donor is His264.

It belongs to the LpxC family. The cofactor is Zn(2+).

The enzyme catalyses a UDP-3-O-[(3R)-3-hydroxyacyl]-N-acetyl-alpha-D-glucosamine + H2O = a UDP-3-O-[(3R)-3-hydroxyacyl]-alpha-D-glucosamine + acetate. It functions in the pathway glycolipid biosynthesis; lipid IV(A) biosynthesis; lipid IV(A) from (3R)-3-hydroxytetradecanoyl-[acyl-carrier-protein] and UDP-N-acetyl-alpha-D-glucosamine: step 2/6. Catalyzes the hydrolysis of UDP-3-O-myristoyl-N-acetylglucosamine to form UDP-3-O-myristoylglucosamine and acetate, the committed step in lipid A biosynthesis. This Burkholderia cenocepacia (strain ATCC BAA-245 / DSM 16553 / LMG 16656 / NCTC 13227 / J2315 / CF5610) (Burkholderia cepacia (strain J2315)) protein is UDP-3-O-acyl-N-acetylglucosamine deacetylase.